The sequence spans 506 residues: COP9 signalosome complex subunit 2 (506 aa).

Positions 252–420 constitute a PCI domain; sequence SEENWEEAQS…GTVVVESASD (169 aa). A compositionally biased stretch (basic residues) spans 482–491; sequence SGHRFRRGGK. The interval 482 to 506 is disordered; sequence SGHRFRRGGKGSKAGGGLGMKTGLF. Gly residues predominate over residues 492-506; sequence GSKAGGGLGMKTGLF.

The protein belongs to the CSN2 family. As to quaternary structure, component of the COP9 signalosome (CSN) complex.

The protein localises to the cytoplasm. The protein resides in the nucleus. In terms of biological role, component of the COP9 signalosome (CSN) complex that acts as an regulator of the ubiquitin (Ubl) conjugation pathway by mediating the deneddylation of the cullin subunit of SCF-type E3 ubiquitin-protein ligase complexes. The CSN complex seems to link protein degradation to sexual development. Required for fruit body formation. The sequence is that of COP9 signalosome complex subunit 2 (csnB) from Emericella nidulans (strain FGSC A4 / ATCC 38163 / CBS 112.46 / NRRL 194 / M139) (Aspergillus nidulans).